The following is a 119-amino-acid chain: Hydrogenase maturation factor HypA (119 aa).

His2 contacts Ni(2+). Cys73, Cys76, Cys90, and Cys93 together coordinate Zn(2+).

It belongs to the HypA/HybF family.

In terms of biological role, involved in the maturation of [NiFe] hydrogenases. Required for nickel insertion into the metal center of the hydrogenase. This Wolinella succinogenes (strain ATCC 29543 / DSM 1740 / CCUG 13145 / JCM 31913 / LMG 7466 / NCTC 11488 / FDC 602W) (Vibrio succinogenes) protein is Hydrogenase maturation factor HypA.